A 463-amino-acid polypeptide reads, in one-letter code: Digalactosyldiacylglycerol synthase 2, chloroplastic (463 aa).

A signal peptide spans 1–22 (MGKKQHIAIFTTASLPWLTGTA).

It belongs to the glycosyltransferase group 1 family. Glycosyltransferase 4 subfamily. High expression in nodules infected cells, and low in nodule and root vascular tissue.

It localises to the plastid. The protein resides in the chloroplast outer membrane. The protein localises to the plastid outer membrane. The enzyme catalyses a 1,2-diacyl-3-O-(beta-D-galactosyl)-sn-glycerol + UDP-alpha-D-galactose = a 1,2-diacyl-3-O-[alpha-D-galactosyl-(1-&gt;6)-beta-D-galactosyl]-sn-glycerol + UDP + H(+). In terms of biological role, involved in the synthesis of diacylglycerol galactolipids that are specifically found in thylakoid and in nodule peribacteroid membranes. Specific for alpha-glycosidic linkages. The polypeptide is Digalactosyldiacylglycerol synthase 2, chloroplastic (Lotus japonicus (Lotus corniculatus var. japonicus)).